The sequence spans 95 residues: Cell division topological specificity factor (95 aa).

The protein belongs to the MinE family.

Functionally, prevents the cell division inhibition by proteins MinC and MinD at internal division sites while permitting inhibition at polar sites. This ensures cell division at the proper site by restricting the formation of a division septum at the midpoint of the long axis of the cell. This is Cell division topological specificity factor from Trichodesmium erythraeum (strain IMS101).